The primary structure comprises 524 residues: MAKKTASKKKSVSRKVTKTSSKKATARKGAVAKAAKKSVKKAAPRKSATARRPKGPVWQWSAVDTAAAIRSGAISAVETVEAHLDRMRAVNPRLNAVVVDLSKEALKAAHAADKQRAKGGELGLLHGVPITIKENVDYEGRPNFNGVPANKDYIAPSDAPVVRNLKKAGAIVIGLTNTPEFSFRGFTDNPLHGLTLNPWDPDITCGGSSGGAGSAVAAGIGTIAHGNDIGGSLRWPAHCNGVATIKPTQGRIPAFNGSATAERPMLAHLMSAQGPLARHVADVRLALEVMSQRDPRDPWWVPAPLVGPKPKGPIKVALAKIPDDMDVDPAVAAALRRAADHLERSGYRVSEVEVPDINGVWQTWCDIITNETMVMQEAAMLKVTSEDFHNAWNGMKAKANVLDLKAWMQATAARNGHIRAWQLFFEDYPVVLAPTTVSPTPGPRDDTISAERVQEVFWGGIRFISAINVLGLPGAVVPVALHEGKPIGVQLITGRYREDLALDAAAAIENRAGVLAHRLWETMD.

Composition is skewed to basic residues over residues 1 to 26 and 34 to 54; these read MAKKTASKKKSVSRKVTKTSSKKATA and AAKKSVKKAAPRKSATARRPK. The disordered stretch occupies residues 1-56; that stretch reads MAKKTASKKKSVSRKVTKTSSKKATARKGAVAKAAKKSVKKAAPRKSATARRPKGP. Active-site charge relay system residues include Lys-133 and Ser-208. The active-site Acyl-ester intermediate is the Ser-232.

Belongs to the amidase family.

It functions in the pathway plant hormone metabolism; auxin biosynthesis. In terms of biological role, hydrolyzes indole-3-acetamide (IAM) into indole-3-acetic acid (IAA). The polypeptide is Indoleacetamide hydrolase (bam) (Bradyrhizobium diazoefficiens (strain JCM 10833 / BCRC 13528 / IAM 13628 / NBRC 14792 / USDA 110)).